A 947-amino-acid chain; its full sequence is Beta-glucosidase (947 aa).

The active site involves Asp-696.

This sequence belongs to the glycosyl hydrolase 3 family.

It carries out the reaction Hydrolysis of terminal, non-reducing beta-D-glucosyl residues with release of beta-D-glucose.. It participates in glycan metabolism; cellulose degradation. The protein is Beta-glucosidase of Ruminococcus albus.